Reading from the N-terminus, the 147-residue chain is Hemoglobin subunit beta (147 aa).

At Val2 the chain carries N-acetylvaline. A Globin domain is found at 3 to 147 (HLTPDEKAAV…VANALAHKYH (145 aa)). Thr13 bears the Phosphothreonine mark. Position 45 is a phosphoserine (Ser45). Lys60 carries the N6-acetyllysine modification. Heme b is bound at residue His64. An N6-acetyllysine modification is found at Lys83. Position 93 (His93) interacts with heme b. Cys94 is subject to S-nitrosocysteine. N6-acetyllysine is present on Lys145.

This sequence belongs to the globin family. Heterotetramer of two alpha chains and two beta chains. As to expression, red blood cells.

Involved in oxygen transport from the lung to the various peripheral tissues. The chain is Hemoglobin subunit beta (HBB) from Colobus polykomos (Western black-and-white colobus monkey).